Consider the following 262-residue polypeptide: Ribose-5-phosphate isomerase A (262 aa).

Residues 33-36, 89-92, and 102-105 each bind substrate; these read TGST, DGAD, and KGGG. The active-site Proton acceptor is the E111. K129 serves as a coordination point for substrate.

It belongs to the ribose 5-phosphate isomerase family. Homodimer.

It carries out the reaction aldehydo-D-ribose 5-phosphate = D-ribulose 5-phosphate. The protein operates within carbohydrate degradation; pentose phosphate pathway; D-ribose 5-phosphate from D-ribulose 5-phosphate (non-oxidative stage): step 1/1. Catalyzes the reversible conversion of ribose-5-phosphate to ribulose 5-phosphate. This is Ribose-5-phosphate isomerase A from Cereibacter sphaeroides (strain KD131 / KCTC 12085) (Rhodobacter sphaeroides).